A 372-amino-acid chain; its full sequence is GDSL esterase/lipase At5g45910 (372 aa).

Positions 1–19 (MRINMLFIVAFSFLVSVRS) are cleaved as a signal peptide. Serine 37 serves as the catalytic Nucleophile. Residues asparagine 66, asparagine 101, and asparagine 137 are each glycosylated (N-linked (GlcNAc...) asparagine). Active-site residues include aspartate 345 and histidine 348.

Belongs to the 'GDSL' lipolytic enzyme family.

The protein resides in the secreted. This is GDSL esterase/lipase At5g45910 from Arabidopsis thaliana (Mouse-ear cress).